The primary structure comprises 327 residues: Polyadenylate-binding protein-interacting protein 9 (327 aa).

Positions 59–69 (KLNPLAKEFFP) match the PAM2-like motif. Over residues 97–113 (KQSGEEFDLDAKKDDNT) the composition is skewed to basic and acidic residues. The segment at 97–132 (KQSGEEFDLDAKKDDNTRKRRNYSQGRRRLTGRISK) is disordered. A Bipartite nuclear localization signal motif is present at residues 114–125 (RKRRNYSQGRRR). The segment covering 114–127 (RKRRNYSQGRRRLT) has biased composition (basic residues). RRM domains follow at residues 141-216 (RTVY…PSKT) and 238-314 (RTIY…PSKT). The segment at 308 to 327 (RVSPSKTPVRPRITRPPSTN) is disordered.

The protein localises to the nucleus. In Arabidopsis thaliana (Mouse-ear cress), this protein is Polyadenylate-binding protein-interacting protein 9 (CID9).